The primary structure comprises 395 residues: Biotin biosynthesis cytochrome P450 (395 aa).

Substrate is bound at residue Arg-60. His-89–Arg-93 lines the heme pocket. Ile-169 to Arg-173 is a binding site for substrate. A disulfide bridge connects residues Cys-250 and Cys-275. Thr-285–Arg-287 contacts heme. Tyr-307 serves as a coordination point for substrate. Heme contacts are provided by residues His-343–Cys-345 and Cys-345.

The cofactor is heme.

It catalyses the reaction a C2-C8-saturated long-chain fatty acyl-[ACP] + 2 reduced [flavodoxin] + 3 O2 = 6-carboxyhexanoyl-[ACP] + a fatty aldehyde + 2 oxidized [flavodoxin] + 3 H2O + 3 H(+). It participates in cofactor biosynthesis; biotin biosynthesis. Functionally, catalyzes the C-C bond cleavage of fatty acid linked to acyl carrier protein (ACP) to generate pimelic acid for biotin biosynthesis. It has high affinity for long-chain fatty acids with the greatest affinity for myristic acid. This chain is Biotin biosynthesis cytochrome P450 (bioI), found in Bacillus subtilis (strain 168).